The following is a 157-amino-acid chain: SsrA-binding protein (157 aa).

Belongs to the SmpB family.

It localises to the cytoplasm. Its function is as follows. Required for rescue of stalled ribosomes mediated by trans-translation. Binds to transfer-messenger RNA (tmRNA), required for stable association of tmRNA with ribosomes. tmRNA and SmpB together mimic tRNA shape, replacing the anticodon stem-loop with SmpB. tmRNA is encoded by the ssrA gene; the 2 termini fold to resemble tRNA(Ala) and it encodes a 'tag peptide', a short internal open reading frame. During trans-translation Ala-aminoacylated tmRNA acts like a tRNA, entering the A-site of stalled ribosomes, displacing the stalled mRNA. The ribosome then switches to translate the ORF on the tmRNA; the nascent peptide is terminated with the 'tag peptide' encoded by the tmRNA and targeted for degradation. The ribosome is freed to recommence translation, which seems to be the essential function of trans-translation. This chain is SsrA-binding protein, found in Lacticaseibacillus paracasei (strain ATCC 334 / BCRC 17002 / CCUG 31169 / CIP 107868 / KCTC 3260 / NRRL B-441) (Lactobacillus paracasei).